The sequence spans 356 residues: Replication factor C subunit 3 (356 aa).

K20 is modified (N6-acetyllysine). S125 is subject to Phosphoserine.

The protein belongs to the activator 1 small subunits family. As to quaternary structure, subunit of the RFC complex, an heteropentameric complex consisting of a large subunit RFC1 and four small subunits RFC2, RFC3, RFC4 and RFC5; the RFC complex interacts with PCNA. Forms an heterotetrameric complex with RFC2, RFC4 and RFC5; this complex has ATPase activity but is not stimulated by PCNA. The heterotetramer of subunits RFC2, RFC3, RFC4 and RFC5 interacts with RAD17. Interacts with CNTD1; this interaction facilitates crossover formation.

It localises to the nucleus. Subunit of the replication factor C (RFC) complex which acts during elongation of primed DNA templates by DNA polymerases delta and epsilon, and is necessary for ATP-dependent loading of proliferating cell nuclear antigen (PCNA) onto primed DNA. The polypeptide is Replication factor C subunit 3 (RFC3) (Homo sapiens (Human)).